The primary structure comprises 163 residues: NADH-quinone oxidoreductase subunit I (163 aa).

2 4Fe-4S ferredoxin-type domains span residues 53-83 (LRRY…IEAG) and 94-123 (VRYD…EGPN). [4Fe-4S] cluster-binding residues include C63, C66, C69, C73, C103, C106, C109, and C113.

This sequence belongs to the complex I 23 kDa subunit family. In terms of assembly, NDH-1 is composed of 14 different subunits. Subunits NuoA, H, J, K, L, M, N constitute the membrane sector of the complex. [4Fe-4S] cluster is required as a cofactor.

The protein localises to the cell inner membrane. The enzyme catalyses a quinone + NADH + 5 H(+)(in) = a quinol + NAD(+) + 4 H(+)(out). Its function is as follows. NDH-1 shuttles electrons from NADH, via FMN and iron-sulfur (Fe-S) centers, to quinones in the respiratory chain. The immediate electron acceptor for the enzyme in this species is believed to be ubiquinone. Couples the redox reaction to proton translocation (for every two electrons transferred, four hydrogen ions are translocated across the cytoplasmic membrane), and thus conserves the redox energy in a proton gradient. This chain is NADH-quinone oxidoreductase subunit I, found in Brucella abortus (strain S19).